The sequence spans 59 residues: UPF0391 membrane protein lpl2443 (59 aa).

2 consecutive transmembrane segments (helical) span residues 5 to 25 (ALIFFIIAIIAAAFGFGGIAV) and 30 to 50 (IAKILFFLFLVMFVIFLIMGL).

The protein belongs to the UPF0391 family.

The protein localises to the cell membrane. This Legionella pneumophila (strain Lens) protein is UPF0391 membrane protein lpl2443.